The chain runs to 344 residues: Fibronectin type 3 and ankyrin repeat domains 1 protein (344 aa).

Residues 11–108 enclose the Fibronectin type-III domain; sequence KPHPPVVGKV…VVSVATTREP (98 aa). 6 ANK repeats span residues 109 to 139, 143 to 172, 176 to 205, 209 to 238, 243 to 273, and 277 to 306; these read ISSEHFHRAVSVNDEDLLLRILEGGHVMIDV, FGFTALMVAAQKGYTRLVKILVSNGTDVNL, SGKDSLMLACYAGHLDVVKYLRRHGASWEA, GGCTALHWAADGGHCSVIDWMIKDGCEVDV, SGWTPLMRVSAVTGSQKVASLLIEAGADVNI, and DGKTPLMVAVLNNHEQLVQLLLDKGADATV.

In terms of assembly, interacts with COPS5; regulates the phosphorylation of JUN and the transcriptional activity of AP-1. Interacts with RYBP; may prevent the ubiquitin-mediated proteasomal degradation of FANK1. Post-translationally, polyubiquitinated. Polyubiquitination leads to proteasomal degradation. As to expression, mostly restricted to testis (at protein level), including mid to late pachytene spermatocytes (stages VI-X), diplotene spermatocytes (stage XI), meiotically dividing spermatocytes (stage XII) and spermatids in steps 1-14. Highest levels in late pachytene spermatocytes and spermatids in steps 1-9.

Its subcellular location is the nucleus. The protein localises to the cytoplasm. It localises to the cytosol. The protein resides in the cytoskeleton. It is found in the cilium basal body. Its subcellular location is the cell projection. The protein localises to the cilium. Functionally, through the activation of JUN and AP-1-mediated transcription, may regulate apoptosis. The protein is Fibronectin type 3 and ankyrin repeat domains 1 protein of Mus musculus (Mouse).